The following is a 193-amino-acid chain: MTEENRPQPDQPELTVTSESSVQETGENKARTPEQEGEAMPSLEQLLKKAELDAAEHYDAWLRAKAEGENIRKRAQMDVTNAHKYAIENFSTELLSVMDSLEAALAVENATVENFKSGMELTLKQLTATFAKFNIKQLSPQGEKFDPHLHQAMCMVESELPHNTVVQVMQKGYVLNDRVIRPALVSVSKGKES.

Residues 1-40 (MTEENRPQPDQPELTVTSESSVQETGENKARTPEQEGEAM) form a disordered region. A compositionally biased stretch (polar residues) spans 14-25 (LTVTSESSVQET).

The protein belongs to the GrpE family. Homodimer.

It is found in the cytoplasm. Participates actively in the response to hyperosmotic and heat shock by preventing the aggregation of stress-denatured proteins, in association with DnaK and GrpE. It is the nucleotide exchange factor for DnaK and may function as a thermosensor. Unfolded proteins bind initially to DnaJ; upon interaction with the DnaJ-bound protein, DnaK hydrolyzes its bound ATP, resulting in the formation of a stable complex. GrpE releases ADP from DnaK; ATP binding to DnaK triggers the release of the substrate protein, thus completing the reaction cycle. Several rounds of ATP-dependent interactions between DnaJ, DnaK and GrpE are required for fully efficient folding. This Nitrosospira multiformis (strain ATCC 25196 / NCIMB 11849 / C 71) protein is Protein GrpE.